The chain runs to 156 residues: Ribosomal RNA large subunit methyltransferase H (156 aa).

S-adenosyl-L-methionine-binding positions include L73, G104, and 123-128 (ISSMTL).

This sequence belongs to the RNA methyltransferase RlmH family. As to quaternary structure, homodimer.

The protein localises to the cytoplasm. It carries out the reaction pseudouridine(1915) in 23S rRNA + S-adenosyl-L-methionine = N(3)-methylpseudouridine(1915) in 23S rRNA + S-adenosyl-L-homocysteine + H(+). Its function is as follows. Specifically methylates the pseudouridine at position 1915 (m3Psi1915) in 23S rRNA. This is Ribosomal RNA large subunit methyltransferase H from Burkholderia ambifaria (strain ATCC BAA-244 / DSM 16087 / CCUG 44356 / LMG 19182 / AMMD) (Burkholderia cepacia (strain AMMD)).